The chain runs to 778 residues: Double zinc ribbon and ankyrin repeat-containing protein 1 (778 aa).

Phosphoserine is present on residues Ser-179 and Ser-201. DZANK-type zinc fingers lie at residues 230–289 (CAHC…CVVC) and 359–407 (CSRC…GSCG). ANK repeat units lie at residues 631–662 (ENKL…DPNC) and 666–695 (QGRP…DIDQ). Ser-768 is modified (phosphoserine).

As to quaternary structure, interacts with NINL. Associates with DYNC1H1 and multiple dynein intermediate and light chains as well as actin-binding proteins.

The protein resides in the cytoplasm. Its subcellular location is the cytoskeleton. It localises to the microtubule organizing center. It is found in the centrosome. The protein localises to the cilium basal body. Functionally, involved in vesicle transport in photoreceptor cells. The protein is Double zinc ribbon and ankyrin repeat-containing protein 1 (Dzank1) of Mus musculus (Mouse).